The following is a 347-amino-acid chain: NADH-ubiquinone oxidoreductase chain 2 (347 aa).

11 helical membrane-spanning segments follow: residues 1-21 (MNPL…VIVM), 25-45 (HWLT…PMLM), 59-79 (YFLT…INLT), 96-116 (IIMT…FWVP), 127-147 (CLIL…MISP), 149-169 (INLN…GWGG), 178-198 (IMAY…AYNP), 200-220 (MTML…MLLI), 237-257 (IPLV…LPPL), 276-296 (IILP…YMRL), and 325-345 (LLSP…TMLL).

Belongs to the complex I subunit 2 family. As to quaternary structure, core subunit of respiratory chain NADH dehydrogenase (Complex I) which is composed of 45 different subunits. Interacts with TMEM242.

It is found in the mitochondrion inner membrane. The enzyme catalyses a ubiquinone + NADH + 5 H(+)(in) = a ubiquinol + NAD(+) + 4 H(+)(out). In terms of biological role, core subunit of the mitochondrial membrane respiratory chain NADH dehydrogenase (Complex I) which catalyzes electron transfer from NADH through the respiratory chain, using ubiquinone as an electron acceptor. Essential for the catalytic activity and assembly of complex I. This chain is NADH-ubiquinone oxidoreductase chain 2, found in Natalus tumidirostris (Trinidadian funnel-eared bat).